A 362-amino-acid chain; its full sequence is MRVDAFDFDLPEEHIALRPAEPRDAARMLVVRPGGAPELSDLKVRDLPDFITANDALVVNDTRVIPAALEGVRERDGGSAVRIEANLIKRLDASRWQAFAKPGKRLRVGDRVRFGGEGSACLLGALDAQIAAKEDDGSVILAFDLAGTALDEAVTAVGHMPIPPYIAARRAEDDRDRADYQTLFARVSGSVAAPTASLHFTPELMARIAATGASMHTVTLHVGAGTFLPVKAEDTTGHRMHAEWGEVSADTAAALNAVKAKGGRIFTVGSTSTRLIESATGEDGTIRPFVGETDIFITPGYRFRAVDGMLTNFHLPRSTLVMLVAAFVGHEAQKRAYAHAIAAGYRFYSYGDACLLLPEGGP.

The protein belongs to the QueA family. In terms of assembly, monomer.

It is found in the cytoplasm. The enzyme catalyses 7-aminomethyl-7-carbaguanosine(34) in tRNA + S-adenosyl-L-methionine = epoxyqueuosine(34) in tRNA + adenine + L-methionine + 2 H(+). It functions in the pathway tRNA modification; tRNA-queuosine biosynthesis. Transfers and isomerizes the ribose moiety from AdoMet to the 7-aminomethyl group of 7-deazaguanine (preQ1-tRNA) to give epoxyqueuosine (oQ-tRNA). This Xanthobacter autotrophicus (strain ATCC BAA-1158 / Py2) protein is S-adenosylmethionine:tRNA ribosyltransferase-isomerase.